A 207-amino-acid chain; its full sequence is Large ribosomal subunit protein uL4 (207 aa).

Positions 49-78 (HAVKNRSAVSGGGRKPWRQKGTGRARQGSI) are disordered.

Belongs to the universal ribosomal protein uL4 family. As to quaternary structure, part of the 50S ribosomal subunit.

Functionally, one of the primary rRNA binding proteins, this protein initially binds near the 5'-end of the 23S rRNA. It is important during the early stages of 50S assembly. It makes multiple contacts with different domains of the 23S rRNA in the assembled 50S subunit and ribosome. In terms of biological role, forms part of the polypeptide exit tunnel. In Streptococcus pyogenes serotype M1, this protein is Large ribosomal subunit protein uL4 (rplD).